Consider the following 332-residue polypeptide: Malate dehydrogenase (332 aa).

15-21 (GAAGHIG) contacts NAD(+). Substrate contacts are provided by Arg-96 and Arg-102. NAD(+) is bound by residues Asn-109 and 133–135 (VGN). The substrate site is built by Asn-135 and Arg-166. The Proton acceptor role is filled by His-191.

The protein belongs to the LDH/MDH superfamily. MDH type 2 family.

It catalyses the reaction (S)-malate + NAD(+) = oxaloacetate + NADH + H(+). Functionally, catalyzes the reversible oxidation of malate to oxaloacetate. The chain is Malate dehydrogenase from Mycolicibacterium vanbaalenii (strain DSM 7251 / JCM 13017 / BCRC 16820 / KCTC 9966 / NRRL B-24157 / PYR-1) (Mycobacterium vanbaalenii).